Here is a 278-residue protein sequence, read N- to C-terminus: Putative B3 domain-containing protein At2g21920 (278 aa).

The segment at residues 168 to 275 (ISKTLSRTDV…KFIILNFEYN (108 aa)) is a DNA-binding region (TF-B3).

The protein localises to the nucleus. In Arabidopsis thaliana (Mouse-ear cress), this protein is Putative B3 domain-containing protein At2g21920.